Consider the following 232-residue polypeptide: MSNVDRAEIAKFEALAHRWWDRESEFKPLHDINPLRVNWIDERANLAGKKVLDVGCGGGILSEAMALRGATVTGIDMGEAPLAVAQLHQLESGVSVEYRQITAEDLAEEMPEQFDVVTCLEMLEHVPDPSSVIRACHRMVKPGGQVFFSTINRNPKAYLFAVVGAEYILNLLPRGTHDFKKFIRPSELGAWSRDAGLQVKDIIGLTYNPLTKHYKLASDVDVNYMIQTLREA.

Residues R36, G55, D76, and L120 each coordinate S-adenosyl-L-methionine.

This sequence belongs to the methyltransferase superfamily. UbiG/COQ3 family.

The enzyme catalyses a 3-demethylubiquinol + S-adenosyl-L-methionine = a ubiquinol + S-adenosyl-L-homocysteine + H(+). It catalyses the reaction a 3-(all-trans-polyprenyl)benzene-1,2-diol + S-adenosyl-L-methionine = a 2-methoxy-6-(all-trans-polyprenyl)phenol + S-adenosyl-L-homocysteine + H(+). The protein operates within cofactor biosynthesis; ubiquinone biosynthesis. Its function is as follows. O-methyltransferase that catalyzes the 2 O-methylation steps in the ubiquinone biosynthetic pathway. The chain is Ubiquinone biosynthesis O-methyltransferase from Pseudomonas syringae pv. tomato (strain ATCC BAA-871 / DC3000).